The primary structure comprises 126 residues: uncharacterized protein (126 aa).

Positions 1-101 (MQASSEPANV…KSVGSQSADE (101 aa)) are disordered. Polar residues-rich tracts occupy residues 14–27 (GQNQSSEGQLSTSP) and 86–99 (DTEALQKSVGSQSA).

This is an uncharacterized protein from Schizosaccharomyces pombe (strain 972 / ATCC 24843) (Fission yeast).